The primary structure comprises 349 residues: GDSL esterase/lipase At2g19060 (349 aa).

Residues 1 to 25 (MADKMFKALLWAFATAVVMAEAVRG) form the signal peptide. S37 serves as the catalytic Nucleophile. N178 carries N-linked (GlcNAc...) asparagine glycosylation. Catalysis depends on residues D317 and H320.

This sequence belongs to the 'GDSL' lipolytic enzyme family.

The protein localises to the secreted. In Arabidopsis thaliana (Mouse-ear cress), this protein is GDSL esterase/lipase At2g19060.